Reading from the N-terminus, the 249-residue chain is Probable phosphatase VVA0289 (249 aa).

Positions 8, 10, 16, 41, 74, 102, 132, 194, and 196 each coordinate Zn(2+).

The protein belongs to the PHP family. The cofactor is Zn(2+).

In Vibrio vulnificus (strain YJ016), this protein is Probable phosphatase VVA0289.